A 246-amino-acid chain; its full sequence is Small ribosomal subunit protein uS2 (246 aa).

The disordered stretch occupies residues 224-246; the sequence is AKQGEEEAEAAEETAPETETTTA. Over residues 229-239 the composition is skewed to acidic residues; sequence EEAEAAEETAP.

The protein belongs to the universal ribosomal protein uS2 family.

The polypeptide is Small ribosomal subunit protein uS2 (Bacillus velezensis (strain DSM 23117 / BGSC 10A6 / LMG 26770 / FZB42) (Bacillus amyloliquefaciens subsp. plantarum)).